The primary structure comprises 434 residues: Perilipin-3 (434 aa).

The tract at residues 1 to 22 is disordered; it reads MSADGAEADGSTQVTVEEPVQQ. Residue Ser2 is modified to N-acetylserine. Ser31 bears the Phosphoserine mark. Position 65 is an N6-acetyllysine (Lys65). Ser91 is subject to Phosphoserine. Residue Lys122 forms a Glycyl lysine isopeptide (Lys-Gly) (interchain with G-Cter in SUMO1) linkage. Phosphoserine is present on residues Ser130 and Ser148. At Thr170 the chain carries Phosphothreonine. Ser175 and Ser179 each carry phosphoserine. Position 216 is a phosphothreonine (Thr216). Residues Ser217 and Ser241 each carry the phosphoserine modification. Position 251 is a phosphotyrosine (Tyr251). Coiled-coil stretches lie at residues 252–277 and 353–377; these read EHSL…QVLS and TNVK…SSIH.

It belongs to the perilipin family. As to quaternary structure, homooligomer. Interacts with M6PR (via the cytoplasmic domain). Interacts with IGF2R (via the cytoplasmic domain). May exist as a homodimer. Post-translationally, phosphorylation at Tyr-251 by isoform 1 of CHKA (CHKalpha2) promotes dissociation from lipid droplets: dissociation is followed by recruitment of autophagosome machinery to lipid droplets and subsequent lipid droplet lipolysis.

The protein localises to the lipid droplet. Its subcellular location is the endosome membrane. The protein resides in the cytoplasm. In terms of biological role, structural component of lipid droplets, which is required for the formation and maintenance of lipid storage droplets. Required for the transport of mannose 6-phosphate receptors (MPR) from endosomes to the trans-Golgi network. The chain is Perilipin-3 (PLIN3) from Homo sapiens (Human).